We begin with the raw amino-acid sequence, 361 residues long: Phosphate acyltransferase (361 aa).

It belongs to the PlsX family. In terms of assembly, homodimer. Probably interacts with PlsY.

The protein localises to the cytoplasm. It catalyses the reaction a fatty acyl-[ACP] + phosphate = an acyl phosphate + holo-[ACP]. It functions in the pathway lipid metabolism; phospholipid metabolism. In terms of biological role, catalyzes the reversible formation of acyl-phosphate (acyl-PO(4)) from acyl-[acyl-carrier-protein] (acyl-ACP). This enzyme utilizes acyl-ACP as fatty acyl donor, but not acyl-CoA. In Parvibaculum lavamentivorans (strain DS-1 / DSM 13023 / NCIMB 13966), this protein is Phosphate acyltransferase.